The chain runs to 443 residues: Clustered-asparagine-rich protein (443 aa).

Positions 16–106 (TKLHIQNIPP…RNIDAKFAVP (91 aa)) constitute an RRM 1 domain. Residues 253-279 (NHLNNNNNNINNNNNNNNNNNNNNNVM) form a disordered region. The span at 256-277 (NNNNNNINNNNNNNNNNNNNNN) shows a compositional bias: low complexity. The RRM 2 domain maps to 342–435 (SSITIMKKQN…KYLKVQLKKG (94 aa)).

The chain is Clustered-asparagine-rich protein from Plasmodium falciparum.